The primary structure comprises 140 residues: MNTLQKIAYRSKQQPLVPLGTLLTTAAVVLAAKSLKQGRKKDTQRYFRYRVGFQAFTLVALVIGGMYYQKESAEQKQTREDKLREKAKLREQLWIEELERRDQLIKARKQRLEESKKELMKVAQEGFEQERERELKKEDK.

Residues 1-79 (MNTLQKIAYR…KESAEQKQTR (79 aa)) form the HIG1 domain. Transmembrane regions (helical) follow at residues 16 to 32 (LVPLGTLLTTAAVVLAA) and 46 to 68 (YFRYRVGFQAFTLVALVIGGMYY). Residues 68–126 (YQKESAEQKQTREDKLREKAKLREQLWIEELERRDQLIKARKQRLEESKKELMKVAQEG) are a coiled coil.

This sequence belongs to the RCF1 family. Associates with the respiratory chain complex III/complex IV supercomplex.

Its subcellular location is the mitochondrion membrane. In terms of biological role, cytochrome c oxidase subunit which plays a role in assembly of respiratory supercomplexes. The sequence is that of Respiratory supercomplex factor 1, mitochondrial (RCF1) from Clavispora lusitaniae (strain ATCC 42720) (Yeast).